The sequence spans 433 residues: Histidinol dehydrogenase 2 (433 aa).

Positions 130, 192, and 215 each coordinate NAD(+). Residues serine 238, glutamine 260, and histidine 263 each coordinate substrate. 2 residues coordinate Zn(2+): glutamine 260 and histidine 263. Catalysis depends on proton acceptor residues glutamate 328 and histidine 329. Residues histidine 329, aspartate 362, glutamate 416, and histidine 421 each coordinate substrate. Aspartate 362 serves as a coordination point for Zn(2+). Histidine 421 contacts Zn(2+).

The protein belongs to the histidinol dehydrogenase family. Zn(2+) is required as a cofactor.

It catalyses the reaction L-histidinol + 2 NAD(+) + H2O = L-histidine + 2 NADH + 3 H(+). The protein operates within amino-acid biosynthesis; L-histidine biosynthesis; L-histidine from 5-phospho-alpha-D-ribose 1-diphosphate: step 9/9. Catalyzes the sequential NAD-dependent oxidations of L-histidinol to L-histidinaldehyde and then to L-histidine. This is Histidinol dehydrogenase 2 (hisD2) from Nostoc sp. (strain PCC 7120 / SAG 25.82 / UTEX 2576).